The sequence spans 358 residues: UDP-N-acetylglucosamine--N-acetylmuramyl-(pentapeptide) pyrophosphoryl-undecaprenol N-acetylglucosamine transferase (358 aa).

UDP-N-acetyl-alpha-D-glucosamine contacts are provided by residues 11–13 (TAG), Asn125, Arg162, Ser196, and Gln288.

Belongs to the glycosyltransferase 28 family. MurG subfamily.

It localises to the cell membrane. It carries out the reaction di-trans,octa-cis-undecaprenyl diphospho-N-acetyl-alpha-D-muramoyl-L-alanyl-D-glutamyl-meso-2,6-diaminopimeloyl-D-alanyl-D-alanine + UDP-N-acetyl-alpha-D-glucosamine = di-trans,octa-cis-undecaprenyl diphospho-[N-acetyl-alpha-D-glucosaminyl-(1-&gt;4)]-N-acetyl-alpha-D-muramoyl-L-alanyl-D-glutamyl-meso-2,6-diaminopimeloyl-D-alanyl-D-alanine + UDP + H(+). Its pathway is cell wall biogenesis; peptidoglycan biosynthesis. Cell wall formation. Catalyzes the transfer of a GlcNAc subunit on undecaprenyl-pyrophosphoryl-MurNAc-pentapeptide (lipid intermediate I) to form undecaprenyl-pyrophosphoryl-MurNAc-(pentapeptide)GlcNAc (lipid intermediate II). This Leifsonia xyli subsp. xyli (strain CTCB07) protein is UDP-N-acetylglucosamine--N-acetylmuramyl-(pentapeptide) pyrophosphoryl-undecaprenol N-acetylglucosamine transferase.